Reading from the N-terminus, the 215-residue chain is Nascent polypeptide-associated complex subunit alpha (215 aa).

Residues 1–81 (MPGEATETVP…SEKKARKAMS (81 aa)) form a disordered region. Over residues 9–21 (VPVTEQEMQQPQV) the composition is skewed to polar residues. Residues 29–42 (SDSDDSVPELEEQD) show a composition bias toward acidic residues. Residues 43–57 (SAQTQTQQAQLAAAA) are compositionally biased toward low complexity. Positions 70–135 (SRSEKKARKA…AKIEDLSQQA (66 aa)) constitute an NAC-A/B domain. Residues 176–213 (VEVKDIELVMSQANVSRAKAVRALKNNNNDIVNAIMEL) form the UBA domain.

The protein belongs to the NAC-alpha family.

Functionally, may promote appropriate targeting of ribosome-nascent polypeptide complexes. This Oreochromis niloticus (Nile tilapia) protein is Nascent polypeptide-associated complex subunit alpha (naca).